A 291-amino-acid polypeptide reads, in one-letter code: ATP phosphoribosyltransferase (291 aa).

This sequence belongs to the ATP phosphoribosyltransferase family. Long subfamily. The cofactor is Mg(2+).

The protein resides in the cytoplasm. It carries out the reaction 1-(5-phospho-beta-D-ribosyl)-ATP + diphosphate = 5-phospho-alpha-D-ribose 1-diphosphate + ATP. It participates in amino-acid biosynthesis; L-histidine biosynthesis; L-histidine from 5-phospho-alpha-D-ribose 1-diphosphate: step 1/9. Its activity is regulated as follows. Feedback inhibited by histidine. In terms of biological role, catalyzes the condensation of ATP and 5-phosphoribose 1-diphosphate to form N'-(5'-phosphoribosyl)-ATP (PR-ATP). Has a crucial role in the pathway because the rate of histidine biosynthesis seems to be controlled primarily by regulation of HisG enzymatic activity. The protein is ATP phosphoribosyltransferase of Desulfosudis oleivorans (strain DSM 6200 / JCM 39069 / Hxd3) (Desulfococcus oleovorans).